We begin with the raw amino-acid sequence, 184 residues long: Peptide deformylase 2 (184 aa).

Positions 110 and 153 each coordinate Fe cation. Residue Glu154 is part of the active site. Position 157 (His157) interacts with Fe cation.

The protein belongs to the polypeptide deformylase family. Fe(2+) is required as a cofactor.

It catalyses the reaction N-terminal N-formyl-L-methionyl-[peptide] + H2O = N-terminal L-methionyl-[peptide] + formate. Functionally, removes the formyl group from the N-terminal Met of newly synthesized proteins. Requires at least a dipeptide for an efficient rate of reaction. N-terminal L-methionine is a prerequisite for activity but the enzyme has broad specificity at other positions. The polypeptide is Peptide deformylase 2 (Geobacillus stearothermophilus (Bacillus stearothermophilus)).